We begin with the raw amino-acid sequence, 218 residues long: Elongation factor Ts (218 aa).

The tract at residues 82–85 (TDFV) is involved in Mg(2+) ion dislocation from EF-Tu.

This sequence belongs to the EF-Ts family.

It localises to the cytoplasm. Functionally, associates with the EF-Tu.GDP complex and induces the exchange of GDP to GTP. It remains bound to the aminoacyl-tRNA.EF-Tu.GTP complex up to the GTP hydrolysis stage on the ribosome. The protein is Elongation factor Ts of Prochlorococcus marinus (strain MIT 9303).